The following is a 1030-amino-acid chain: Putative pentatricopeptide repeat-containing protein At5g06400, mitochondrial (1030 aa).

The N-terminal 77 residues, 1 to 77 (MKALFRFKSC…VKLDETTRLR (77 aa)), are a transit peptide targeting the mitochondrion. PPR repeat units follow at residues 188 to 222 (RVGIYNTMLSIAGEARNLDMVDELVSEMEKNGCDK), 223 to 257 (DIRTWTILISVYGKAKKIGKGLLVFEKMRKSGFEL), 258 to 292 (DATAYNIMIRSLCIAGRGDLALEFYKEMMEKGITF), 293 to 323 (GLRTYKMLLDCIAKSEKVDVVQSIADDMVRI), 328 to 362 (EHDAFGYLLKSFCVSGKIKEALELIRELKNKEMCL), 363 to 393 (DAKYFEILVKGLCRANRMVDALEIVDIMKRR), 397 to 431 (DSNVYGIIISGYLRQNDVSKALEQFEVIKKSGRPP), 432 to 466 (RVSTYTEIMQHLFKLKQFEKGCNLFNEMIENGIEP), 467 to 501 (DSVAITAVVAGHLGQNRVAEAWKVFSSMEEKGIKP), 502 to 536 (TWKSYSIFVKELCRSSRYDEIIKIFNQMHASKIVI), 677 to 711 (NSEAYNMSIKVAGCGKDFKQMRSLFYEMRRQGCLI), 712 to 746 (TQDTWAIMIMQYGRTGLTNIAIRTFKEMKDMGLIP), 747 to 783 (SSSTFKCLITVLCEKKGRNVEEATRTFREMIRSGFVP), 784 to 814 (DRELVQDYLGCLCEVGNTKDAKSCLDSLGKI), 818 to 852 (VTVAYSIYIRALCRIGKLEEALSELASFEGERSLL), 853 to 887 (DQYTYGSIVHGLLQRGDLQKALDKVNSMKEIGTKP), 888 to 922 (GVHVYTSLIVYFFKEKQLEKVLETCQKMEGESCEP), 923 to 957 (SVVTYTAMICGYMSLGKVEEAWNAFRNMEERGTSP), and 958 to 992 (DFKTYSKFINCLCQACKSEDALKLLSEMLDKGIAP).

This sequence belongs to the PPR family. P subfamily.

It localises to the mitochondrion. In Arabidopsis thaliana (Mouse-ear cress), this protein is Putative pentatricopeptide repeat-containing protein At5g06400, mitochondrial.